The sequence spans 180 residues: Large ribosomal subunit protein uL5 (180 aa).

The protein belongs to the universal ribosomal protein uL5 family. In terms of assembly, part of the 50S ribosomal subunit; part of the 5S rRNA/L5/L18/L25 subcomplex. Contacts the 5S rRNA and the P site tRNA. Forms a bridge to the 30S subunit in the 70S ribosome.

Functionally, this is one of the proteins that bind and probably mediate the attachment of the 5S RNA into the large ribosomal subunit, where it forms part of the central protuberance. In the 70S ribosome it contacts protein S13 of the 30S subunit (bridge B1b), connecting the 2 subunits; this bridge is implicated in subunit movement. Contacts the P site tRNA; the 5S rRNA and some of its associated proteins might help stabilize positioning of ribosome-bound tRNAs. This Streptococcus mutans serotype c (strain ATCC 700610 / UA159) protein is Large ribosomal subunit protein uL5.